The sequence spans 443 residues: ATP-dependent protease ATPase subunit HslU (443 aa).

ATP-binding positions include isoleucine 18, 60-65 (GVGKTE), aspartate 256, glutamate 321, and arginine 393.

Belongs to the ClpX chaperone family. HslU subfamily. A double ring-shaped homohexamer of HslV is capped on each side by a ring-shaped HslU homohexamer. The assembly of the HslU/HslV complex is dependent on binding of ATP.

It localises to the cytoplasm. In terms of biological role, ATPase subunit of a proteasome-like degradation complex; this subunit has chaperone activity. The binding of ATP and its subsequent hydrolysis by HslU are essential for unfolding of protein substrates subsequently hydrolyzed by HslV. HslU recognizes the N-terminal part of its protein substrates and unfolds these before they are guided to HslV for hydrolysis. This Escherichia coli O157:H7 (strain EC4115 / EHEC) protein is ATP-dependent protease ATPase subunit HslU.